We begin with the raw amino-acid sequence, 533 residues long: Peptide chain release factor 3 (533 aa).

A tr-type G domain is found at 9–284 (ARRRTFAIIS…ALCELSPPPL (276 aa)). GTP contacts are provided by residues 18 to 25 (SHPDAGKT), 95 to 99 (DTPGH), and 149 to 152 (NKLD).

This sequence belongs to the TRAFAC class translation factor GTPase superfamily. Classic translation factor GTPase family. PrfC subfamily.

It is found in the cytoplasm. Its function is as follows. Increases the formation of ribosomal termination complexes and stimulates activities of RF-1 and RF-2. It binds guanine nucleotides and has strong preference for UGA stop codons. It may interact directly with the ribosome. The stimulation of RF-1 and RF-2 is significantly reduced by GTP and GDP, but not by GMP. This chain is Peptide chain release factor 3, found in Cupriavidus taiwanensis (strain DSM 17343 / BCRC 17206 / CCUG 44338 / CIP 107171 / LMG 19424 / R1) (Ralstonia taiwanensis (strain LMG 19424)).